Consider the following 497-residue polypeptide: Tryptophan decarboxylase 2 (497 aa).

Pyridoxal 5'-phosphate contacts are provided by Ala-162, Ser-163, Thr-257, and Asn-311. Residue Lys-314 is modified to N6-(pyridoxal phosphate)lysine.

It belongs to the group II decarboxylase family. Pyridoxal 5'-phosphate serves as cofactor.

It carries out the reaction L-tryptophan + H(+) = tryptamine + CO2. Involved in serotonin biosynthesis. Catalyzes the decarboxylation of L-tryptophan to tryptamine, which is converted to serotonin by tryptamine 5-hydroxylase. May play a minor role in serotonin biosynthetis during senescence. Accumulation of serotonin attenuates leaf senescence. The chain is Tryptophan decarboxylase 2 from Oryza sativa subsp. japonica (Rice).